A 364-amino-acid polypeptide reads, in one-letter code: MSDARKGPDEADDSQCDSGIESLRSLRSLPEPTAAPGSGSSQSGCPQPWRHAPETHKEPEKEDADGERADSTYASSSLTESFPLLERPEAKDPSPPAPGSPLPPAGVLSPQQLEALTYISEDGDTLLHLAVIHEAPSVLFCCLAFLPQEVLDIQNNLYQTALHLAVHLDQPDVVRALVLKGASRILQDQHGDTALHVACRRQNLACACCLLEEQPEPGRQLSHPLDLQLKNWQGLACLHIATLQRNQPLIELLLQNGADIDVQEGTSGKTALHLAVETQERSLVQFLLQAGARVDARMLNGCTPLHLAAGRGLNSISSTLCEAGADSLLLNVEDETPQDLAEDLLSYLPFDDLKISGKPLLCTD.

Residues 1-108 (MSDARKGPDE…GSPLPPAGVL (108 aa)) form a disordered region. The residue at position 18 (Ser-18) is a Phosphoserine. Low complexity predominate over residues 36–48 (PGSGSSQSGCPQP). Residues 51-70 (HAPETHKEPEKEDADGERAD) are compositionally biased toward basic and acidic residues. Residues 93 to 104 (PSPPAPGSPLPP) are compositionally biased toward pro residues. ANK repeat units follow at residues 122-155 (DGDT…DIQN), 157-186 (LYQT…SRIL), 190-219 (HGDT…EPGR), 233-262 (QGLA…DIDV), 267-296 (SGKT…RVDA), and 300-329 (NGCT…DSLL).

The protein belongs to the NF-kappa-B inhibitor family. In terms of assembly, interacts with RELA, REL, NFKB1 nuclear factor NF-kappa-B p50 subunit and NFKB2 nuclear factor NF-kappa-B p52 subunit. Interacts with HNRNPA2B1; the interaction may be mediated by the RRM2 domain of HNRNPA2B1, and HNRNPA2B1 may interact simultaneously with FAM76B and either NFKBIA or NFKBIE to form a complex. Serine phosphorylated; followed by proteasome-dependent degradation.

It is found in the cytoplasm. Sequesters NF-kappa-B transcription factor complexes in the cytoplasm, thereby inhibiting their activity. Sequestered complexes include NFKB1/p50-RELA/p65 and NFKB1/p50-REL/c-Rel complexes. Limits B-cell activation in response to pathogens, and also plays an important role in B-cell development. The protein is NF-kappa-B inhibitor epsilon (Nfkbie) of Mus musculus (Mouse).